Here is a 508-residue protein sequence, read N- to C-terminus: Catalase (508 aa).

A signal peptide spans 1–21 (MHMSKSFLLISMGLASISVHA). Residues His-72 and Asn-145 contribute to the active site. A heme-binding site is contributed by Tyr-353. Residues 373 to 392 (PKSPVANHNQDGPSNNSTGL) are compositionally biased toward polar residues. The segment at 373–396 (PKSPVANHNQDGPSNNSTGLGNVD) is disordered.

Belongs to the catalase family. Requires heme as cofactor.

It is found in the periplasm. It carries out the reaction 2 H2O2 = O2 + 2 H2O. Decomposes hydrogen peroxide into water and oxygen; serves to protect cells from the toxic effects of hydrogen peroxide. The polypeptide is Catalase (Vibrio vulnificus (strain YJ016)).